The chain runs to 306 residues: UDP-3-O-acyl-N-acetylglucosamine deacetylase (306 aa).

Residues histidine 79, histidine 239, and aspartate 243 each coordinate Zn(2+). Catalysis depends on histidine 266, which acts as the Proton donor.

It belongs to the LpxC family. Requires Zn(2+) as cofactor.

It carries out the reaction a UDP-3-O-[(3R)-3-hydroxyacyl]-N-acetyl-alpha-D-glucosamine + H2O = a UDP-3-O-[(3R)-3-hydroxyacyl]-alpha-D-glucosamine + acetate. The protein operates within glycolipid biosynthesis; lipid IV(A) biosynthesis; lipid IV(A) from (3R)-3-hydroxytetradecanoyl-[acyl-carrier-protein] and UDP-N-acetyl-alpha-D-glucosamine: step 2/6. In terms of biological role, catalyzes the hydrolysis of UDP-3-O-myristoyl-N-acetylglucosamine to form UDP-3-O-myristoylglucosamine and acetate, the committed step in lipid A biosynthesis. This chain is UDP-3-O-acyl-N-acetylglucosamine deacetylase, found in Haemophilus ducreyi (strain 35000HP / ATCC 700724).